The sequence spans 449 residues: Glutathione reductase (449 aa).

FAD contacts are provided by S15, G16, E35, T42, C43, and K51. Position 15 (S15) interacts with glutathione. An intrachain disulfide couples C43 to C48. Y99 provides a ligand contact to glutathione. Residue A115 participates in FAD binding. Positions 175, 178, 181, 198, 204, and 261 each coordinate NADP(+). Residues D302 and T310 each coordinate FAD. Residue A340 participates in NADP(+) binding. H435 contributes to the FAD binding site. H435 serves as the catalytic Proton acceptor.

The protein belongs to the class-I pyridine nucleotide-disulfide oxidoreductase family. As to quaternary structure, homodimer. It depends on FAD as a cofactor.

It is found in the cytoplasm. The enzyme catalyses 2 glutathione + NADP(+) = glutathione disulfide + NADPH + H(+). The protein operates within xenobiotic degradation; (2,4,5-trichlorophenoxy)acetate degradation. Catalyzes the reduction of glutathione disulfide (GSSG) to reduced glutathione (GSH). Constitutes the major mechanism to maintain a high GSH:GSSG ratio in the cytosol. This is Glutathione reductase (gor) from Burkholderia cepacia (Pseudomonas cepacia).